Consider the following 196-residue polypeptide: Recombination protein RecR (196 aa).

The C4-type zinc finger occupies 56-71 (CPVCGGLDSQQPCMIC). One can recognise a Toprim domain in the interval 78 to 172 (PLICVVETVA…SVTRLAQGVP (95 aa)).

Belongs to the RecR family.

In terms of biological role, may play a role in DNA repair. It seems to be involved in an RecBC-independent recombinational process of DNA repair. It may act with RecF and RecO. This Acidiphilium cryptum (strain JF-5) protein is Recombination protein RecR.